The chain runs to 443 residues: MDLGTTKYIIYTELIADGYVEKHDVIGAIFGQTEGLLSTELDLRDLQKSGRIGRIDVELENVNGKSFAKITLPSSLDKVETSILAATLETIDRVGPCFATVKIANVEDIRVSKRQYITNRARHILRQLMDEMVDTYEITEEIKESLRTEEIMEYGPENLPCGPNILHSDSIIIVEGRADVLTLLRCGIKNAIAVEGTSVPKTIMEISKKKTTTAFTDGDRGGELILKELLQTCDIDYVSRAPYGKEVEGTSKKEIMKCLRAKVPVEQIIGEKYKNIVESNPVLNEELVEKITPKYIEEVTHSSKEKNELEKTFKPEIEKETVVIEKIKSFEKKTIDADEKTILQENSNLEKKYNGVKEILEGIKNTGLVKFVVDGKEKTNSFKEFLTNIQEIKNMDFFAADMPITQKIVDLLHDKTPIIVGTEIKVTKKPVNLRLFSFDEIME.

Positions 169-243 (DSIIIVEGRA…DIDYVSRAPY (75 aa)) constitute a Toprim domain. The Mg(2+) site is built by glutamate 175, aspartate 217, and aspartate 219.

It belongs to the archaeal DnaG primase family. As to quaternary structure, forms a ternary complex with MCM helicase and DNA. Mg(2+) serves as cofactor.

It catalyses the reaction ssDNA + n NTP = ssDNA/pppN(pN)n-1 hybrid + (n-1) diphosphate.. Functionally, RNA polymerase that catalyzes the synthesis of short RNA molecules used as primers for DNA polymerase during DNA replication. This is DNA primase DnaG from Methanococcus vannielii (strain ATCC 35089 / DSM 1224 / JCM 13029 / OCM 148 / SB).